Reading from the N-terminus, the 113-residue chain is Hydrogenase maturation factor HypA (113 aa).

Histidine 2 lines the Ni(2+) pocket. Zn(2+) is bound by residues cysteine 73, cysteine 76, cysteine 89, and cysteine 92.

The protein belongs to the HypA/HybF family.

Functionally, involved in the maturation of [NiFe] hydrogenases. Required for nickel insertion into the metal center of the hydrogenase. The protein is Hydrogenase maturation factor HypA of Acidithiobacillus ferrooxidans (strain ATCC 23270 / DSM 14882 / CIP 104768 / NCIMB 8455) (Ferrobacillus ferrooxidans (strain ATCC 23270)).